Consider the following 22-residue polypeptide: Lantibiotic mutacin B-Ny266 (22 aa).

The segment at residues 3 to 7 (SWSFC) is a cross-link (lanthionine (Ser-Cys)). Residue S5 is modified to 2,3-didehydroalanine (Ser). Residues 8 to 11 (TPGC) constitute a cross-link (beta-methyllanthionine (Thr-Cys)). T14 is subject to 2,3-didehydrobutyrine. The lanthionine (Ser-Cys) cross-link spans 16–21 (SFNSYC). A cross-link (S-(2-aminovinyl)-D-cysteine (Ser-Cys)) is located at residues 19 to 22 (SYCC).

Maturation of lantibiotics involves the enzymatic conversion of Thr, and Ser into dehydrated AA and the formation of thioether bonds with cysteine. The C-terminal lanthionine undergoes decarboxylation. This is followed by membrane translocation and cleavage of the modified precursor. In terms of processing, it is not established whether the 2,3-didehydrobutyrine is the E- or Z-isomer.

Functionally, lanthionine-containing peptide antibiotic (lantibiotic) active on Gram-positive bacteria. The bactericidal activity of lantibiotics is based on depolarization of energized bacterial cytoplasmic membranes, initiated by the formation of aqueous transmembrane pores. The chain is Lantibiotic mutacin B-Ny266 from Streptococcus mutans.